Here is a 147-residue protein sequence, read N- to C-terminus: Hemoglobin subunit gamma (147 aa).

The Globin domain maps to 3 to 147; sequence HFTAEEKAAI…VANALAYKYH (145 aa). His64 and His93 together coordinate heme b.

This sequence belongs to the globin family. Heterotetramer of two alpha chains and two gamma chains in fetal hemoglobin (Hb F). In terms of tissue distribution, red blood cells.

In terms of biological role, gamma chains make up the fetal hemoglobin F, in combination with alpha chains. This is Hemoglobin subunit gamma (HBG) from Elephas maximus (Indian elephant).